Here is a 243-residue protein sequence, read N- to C-terminus: NAD-dependent protein deacylase SIR2rp3 (243 aa).

The Deacetylase sirtuin-type domain occupies 1-239 (MKACRCITIL…PTWVDQVLKE (239 aa)). 12-31 (GAGISAESGISTFRDSNGLW) serves as a coordination point for NAD(+). Tyr56 and Arg59 together coordinate substrate. 95–98 (QNVD) serves as a coordination point for NAD(+). His113 (proton acceptor) is an active-site residue. Residues Cys121 and Cys141 each coordinate Zn(2+). NAD(+) is bound by residues 181-183 (GTS) and Ala225.

This sequence belongs to the sirtuin family. Class III subfamily. It depends on Zn(2+) as a cofactor.

It is found in the mitochondrion. It carries out the reaction N(6)-malonyl-L-lysyl-[protein] + NAD(+) + H2O = 2''-O-malonyl-ADP-D-ribose + nicotinamide + L-lysyl-[protein]. It catalyses the reaction N(6)-succinyl-L-lysyl-[protein] + NAD(+) + H2O = 2''-O-succinyl-ADP-D-ribose + nicotinamide + L-lysyl-[protein]. The enzyme catalyses N(6)-glutaryl-L-lysyl-[protein] + NAD(+) + H2O = 2''-O-glutaryl-ADP-D-ribose + nicotinamide + L-lysyl-[protein]. Its function is as follows. NAD-dependent lysine demalonylase, desuccinylase and deglutarylase that specifically removes malonyl, succinyl and glutaryl groups on target proteins. Has weak NAD-dependent protein deacetylase activity; however this activity may not be physiologically relevant in vivo. This chain is NAD-dependent protein deacylase SIR2rp3 (SIR2rp3), found in Leishmania major.